We begin with the raw amino-acid sequence, 485 residues long: GlcNAc-binding protein A (485 aa).

The N-terminal stretch at Met-1–Ala-29 is a signal peptide. A Chitin-binding type-4 domain is found at Val-30–Phe-200. Residues Ala-437–Trp-478 form the Chitin-binding type-3 domain.

Belongs to the GbpA family.

The protein resides in the secreted. Functionally, probably interacts with GlcNAc residues. May promote attachment to both epithelial cell surfaces and chitin. The polypeptide is GlcNAc-binding protein A (Vibrio vulnificus (strain CMCP6)).